The primary structure comprises 183 residues: Ribosome rescue factor SmrB (183 aa).

Residues 98–173 (LDLHGLTQLQ…GDAALLVLIE (76 aa)) form the Smr domain.

Belongs to the SmrB family. In terms of assembly, associates with collided ribosomes, but not with correctly translating polysomes.

Functionally, acts as a ribosome collision sensor. Detects stalled/collided disomes (pairs of ribosomes where the leading ribosome is stalled and a second ribosome has collided with it) and endonucleolytically cleaves mRNA at the 5' boundary of the stalled ribosome. Stalled/collided disomes form a new interface (primarily via the 30S subunits) that binds SmrB. Cleaved mRNA becomes available for tmRNA ligation, leading to ribosomal subunit dissociation and rescue of stalled ribosomes. In Escherichia coli O157:H7, this protein is Ribosome rescue factor SmrB.